The primary structure comprises 234 residues: Chalcone--flavanone isomerase 1 (234 aa).

Residues Thr-50, Asn-115, and Ser-192 each contribute to the substrate site.

The protein belongs to the chalcone isomerase family.

The catalysed reaction is a chalcone = a flavanone.. It functions in the pathway secondary metabolite biosynthesis; flavonoid biosynthesis. Functionally, catalyzes the intramolecular cyclization of bicyclic chalcones into tricyclic (S)-flavanones. Responsible for the isomerization of 4,2',4',6'-tetrahydroxychalcone (also termed chalcone) into naringenin. This is Chalcone--flavanone isomerase 1 (CHI1) from Vitis vinifera (Grape).